The primary structure comprises 522 residues: MKHRTFFSLCAKFGCLLALGACSPKIVDAGTATVPHTLSTLKTADNRPASVYLKKDKPTLIKFWASWCPLCLSELGQAEKWAQDAKFSSANLITVASPGFLHEKKDGEFQKWYAGLNYPKLPVVTDNGGTIAQNLNISVYPSWALIGKDGDVQRIVKGSINEAQALALIRNPNADLGSLKHSFYKPDTQKKDSAIMNTRTIYLAGGCFWGLEAYFQRIDGVVDAVSGYANGNTENPSYEDVSYRHTGHAETVKVTYDADKLSLDDILQYYFRVVDPTSLNKQGNDTGTQYRSGVYYTDPAEKAVIAAALKREQQKYQLPLVVENEPLKNFYDAEEYHQDYLIKNPNGYCHIDIRKADEPLPGKTKAAPQGKGFDAATYKKPSDAELKRTLTEEQYQVTQNSATEYAFSHEYDHLFKPGIYVDVVSGEPLFSSADKYDSGCGWPSFTRPIDAKSVTEHDDFSFNMRRTEVRSRAADSHLGHVFPDGPRDKGGLRYCINGASLKFIPLEQMDAAGYGALKGEVK.

The Thioredoxin domain maps to 17–174 (LALGACSPKI…ALALIRNPNA (158 aa)). Cysteines 68 and 71 form a disulfide. A peptide methionine sulfoxide reductase A region spans residues 199–354 (RTIYLAGGCF…PNGYCHIDIR (156 aa)). C207 is a catalytic residue. The MsrB domain occupies 383–506 (DAELKRTLTE…NGASLKFIPL (124 aa)). C440 and C495 form a disulfide bridge. C495 acts as the Nucleophile in catalysis.

This sequence in the N-terminal section; belongs to the thioredoxin family. It in the central section; belongs to the MsrA Met sulfoxide reductase family. The protein in the C-terminal section; belongs to the MsrB Met sulfoxide reductase family.

The enzyme catalyses L-methionyl-[protein] + [thioredoxin]-disulfide + H2O = L-methionyl-(S)-S-oxide-[protein] + [thioredoxin]-dithiol. It carries out the reaction [thioredoxin]-disulfide + L-methionine + H2O = L-methionine (S)-S-oxide + [thioredoxin]-dithiol. The catalysed reaction is L-methionyl-[protein] + [thioredoxin]-disulfide + H2O = L-methionyl-(R)-S-oxide-[protein] + [thioredoxin]-dithiol. In terms of biological role, has an important function as a repair enzyme for proteins that have been inactivated by oxidation. Catalyzes the reversible oxidation-reduction of methionine sulfoxide in proteins to methionine. This Neisseria gonorrhoeae protein is Peptide methionine sulfoxide reductase MsrA/MsrB (msrAB).